Reading from the N-terminus, the 392-residue chain is Phosphoglycerate kinase (392 aa).

Substrate contacts are provided by residues 21–23, Arg36, 59–62, Arg113, and Arg146; these read DLN and HRGR. ATP is bound by residues Lys197, Glu314, and 340 to 343; that span reads GGDT.

Belongs to the phosphoglycerate kinase family. As to quaternary structure, monomer.

The protein localises to the cytoplasm. It catalyses the reaction (2R)-3-phosphoglycerate + ATP = (2R)-3-phospho-glyceroyl phosphate + ADP. Its pathway is carbohydrate degradation; glycolysis; pyruvate from D-glyceraldehyde 3-phosphate: step 2/5. The protein is Phosphoglycerate kinase of Vesicomyosocius okutanii subsp. Calyptogena okutanii (strain HA).